Consider the following 238-residue polypeptide: 7-cyano-7-deazaguanine synthase (238 aa).

14–24 (FSGGQDSTTCL) is a binding site for ATP. Residues Cys195, Cys204, Cys207, and Cys210 each coordinate Zn(2+).

Belongs to the QueC family. Requires Zn(2+) as cofactor.

It catalyses the reaction 7-carboxy-7-deazaguanine + NH4(+) + ATP = 7-cyano-7-deazaguanine + ADP + phosphate + H2O + H(+). Its pathway is purine metabolism; 7-cyano-7-deazaguanine biosynthesis. Functionally, catalyzes the ATP-dependent conversion of 7-carboxy-7-deazaguanine (CDG) to 7-cyano-7-deazaguanine (preQ(0)). This is 7-cyano-7-deazaguanine synthase from Baumannia cicadellinicola subsp. Homalodisca coagulata.